Reading from the N-terminus, the 393-residue chain is Phosphoglycerate kinase (393 aa).

Residues 22-24 (DFN), Arg-37, 60-63 (HLGR), Arg-119, and Arg-152 each bind substrate. Residues Lys-202, Gly-293, Glu-324, and 350 to 353 (GGDS) each bind ATP.

It belongs to the phosphoglycerate kinase family. As to quaternary structure, monomer.

It is found in the cytoplasm. The catalysed reaction is (2R)-3-phosphoglycerate + ATP = (2R)-3-phospho-glyceroyl phosphate + ADP. It participates in carbohydrate degradation; glycolysis; pyruvate from D-glyceraldehyde 3-phosphate: step 2/5. This chain is Phosphoglycerate kinase, found in Borreliella burgdorferi (strain ZS7) (Borrelia burgdorferi).